The chain runs to 123 residues: Probable ketoamine kinase in tonB 3'region (123 aa).

Residue D26 is the Proton acceptor of the active site.

Belongs to the fructosamine kinase family.

Ketoamine kinase that phosphorylates ketoamines on the third carbon of the sugar moiety to generate ketoamine 3-phosphate. This Klebsiella pneumoniae protein is Probable ketoamine kinase in tonB 3'region.